Reading from the N-terminus, the 38-residue chain is Photosystem II reaction center protein L (38 aa).

A helical transmembrane segment spans residues 17-37; that stretch reads SLYWGLLLIFVLAVLFSNYFF.

Belongs to the PsbL family. In terms of assembly, PSII is composed of 1 copy each of membrane proteins PsbA, PsbB, PsbC, PsbD, PsbE, PsbF, PsbH, PsbI, PsbJ, PsbK, PsbL, PsbM, PsbT, PsbX, PsbY, PsbZ, Psb30/Ycf12, at least 3 peripheral proteins of the oxygen-evolving complex and a large number of cofactors. It forms dimeric complexes.

It localises to the plastid. The protein resides in the chloroplast thylakoid membrane. Functionally, one of the components of the core complex of photosystem II (PSII). PSII is a light-driven water:plastoquinone oxidoreductase that uses light energy to abstract electrons from H(2)O, generating O(2) and a proton gradient subsequently used for ATP formation. It consists of a core antenna complex that captures photons, and an electron transfer chain that converts photonic excitation into a charge separation. This subunit is found at the monomer-monomer interface and is required for correct PSII assembly and/or dimerization. This chain is Photosystem II reaction center protein L, found in Psilotum nudum (Whisk fern).